The chain runs to 394 residues: Elongation factor Tu 1 (394 aa).

The region spanning 10 to 204 is the tr-type G domain; sequence KPHVNVGTIG…ALDSYIPEPE (195 aa). A G1 region spans residues 19 to 26; it reads GHVDHGKT. 19-26 is a GTP binding site; that stretch reads GHVDHGKT. Thr-26 contributes to the Mg(2+) binding site. The interval 60 to 64 is G2; the sequence is GITIN. The segment at 81 to 84 is G3; sequence DCPG. GTP-binding positions include 81–85 and 136–139; these read DCPGH and NKCD. Residues 136-139 are G4; that stretch reads NKCD. Positions 174–176 are G5; sequence SAL.

Belongs to the TRAFAC class translation factor GTPase superfamily. Classic translation factor GTPase family. EF-Tu/EF-1A subfamily. In terms of assembly, monomer.

Its subcellular location is the cytoplasm. It catalyses the reaction GTP + H2O = GDP + phosphate + H(+). Functionally, GTP hydrolase that promotes the GTP-dependent binding of aminoacyl-tRNA to the A-site of ribosomes during protein biosynthesis. This chain is Elongation factor Tu 1, found in Shewanella sp. (strain MR-4).